A 233-amino-acid polypeptide reads, in one-letter code: RNA-free ribonuclease P (233 aa).

It belongs to the HARP family.

The enzyme catalyses Endonucleolytic cleavage of RNA, removing 5'-extranucleotides from tRNA precursor.. In terms of biological role, RNA-free RNase P that catalyzes the removal of the 5'-leader sequence from pre-tRNA to produce the mature 5'-terminus. This is RNA-free ribonuclease P from Methanocaldococcus jannaschii (strain ATCC 43067 / DSM 2661 / JAL-1 / JCM 10045 / NBRC 100440) (Methanococcus jannaschii).